The following is a 119-amino-acid chain: Immunoglobulin heavy variable 2-26 (119 aa).

The first 19 residues, 1–19, serve as a signal peptide directing secretion; the sequence is MDTLCYTLLLLTTPSWVLS. Position 20 is a pyrrolidone carboxylic acid (Gln-20). Residues 20-44 form a framework-1 region; it reads QVTLKESGPVLVKPTETLTLTCTVS. The region spanning 20 to 119 is the Ig-like domain; it reads QVTLKESGPV…DTATYYCARI (100 aa). Cys-41 and Cys-116 are joined by a disulfide. Positions 45–54 are complementarity-determining-1; it reads GFSLSNARMG. The interval 55-71 is framework-2; the sequence is VSWIRQPPGKALEWLAH. A complementarity-determining-2 region spans residues 72–78; sequence IFSNDEK. Positions 79 to 116 are framework-3; the sequence is SYSTSLKSRLTISKDTSKSQVVLTMTNMDPVDTATYYC. The tract at residues 117 to 119 is complementarity-determining-3; it reads ARI.

In terms of assembly, immunoglobulins are composed of two identical heavy chains and two identical light chains; disulfide-linked.

Its subcellular location is the secreted. The protein resides in the cell membrane. Functionally, v region of the variable domain of immunoglobulin heavy chains that participates in the antigen recognition. Immunoglobulins, also known as antibodies, are membrane-bound or secreted glycoproteins produced by B lymphocytes. In the recognition phase of humoral immunity, the membrane-bound immunoglobulins serve as receptors which, upon binding of a specific antigen, trigger the clonal expansion and differentiation of B lymphocytes into immunoglobulins-secreting plasma cells. Secreted immunoglobulins mediate the effector phase of humoral immunity, which results in the elimination of bound antigens. The antigen binding site is formed by the variable domain of one heavy chain, together with that of its associated light chain. Thus, each immunoglobulin has two antigen binding sites with remarkable affinity for a particular antigen. The variable domains are assembled by a process called V-(D)-J rearrangement and can then be subjected to somatic hypermutations which, after exposure to antigen and selection, allow affinity maturation for a particular antigen. The sequence is that of Immunoglobulin heavy variable 2-26 from Homo sapiens (Human).